Consider the following 106-residue polypeptide: ATP-dependent Clp protease adapter protein ClpS (106 aa).

A compositionally biased stretch (basic and acidic residues) spans 1–14 (MTDKAGDWQEHGPQ). Residues 1–21 (MTDKAGDWQEHGPQVEEAPPQ) form a disordered region.

This sequence belongs to the ClpS family. Binds to the N-terminal domain of the chaperone ClpA.

Its function is as follows. Involved in the modulation of the specificity of the ClpAP-mediated ATP-dependent protein degradation. In Alkalilimnicola ehrlichii (strain ATCC BAA-1101 / DSM 17681 / MLHE-1), this protein is ATP-dependent Clp protease adapter protein ClpS.